We begin with the raw amino-acid sequence, 146 residues long: MNEKQKRFADEYIMNGCNGKKAAISAGYSKKTAESLASRLLRNVNVSEYIKERLEQIQEERLMSITEALALSASIARGEPQEAYSKKYDHLNDEVEKEVTYTITPTFEERQRSIDHILKVHGAYIDKKEITQKNIEINIGEYDDES.

It belongs to the SPP1-like small terminase family. Homodecamer. Interacts with the terminase large subunit; the active complex is probably composed of a one monomer of the large subunit and two or more decamers of the small subunit.

The terminase small subunit specifically recognizes the non-adjacent pacL and pacR packaging subsites and regulates the ATPase activity of the terminase large subunit. The terminase lies at a unique vertex of the procapsid and is composed of two subunits, a small terminase subunit involved in viral DNA recognition (packaging sequence), and a large terminase subunit possessing endonucleolytic and ATPase activities. Both terminase subunits heterooligomerize and are docked on the portal protein to form the packaging machine. The terminase large subunit exhibits endonuclease activity and cleaves the viral genome concatemer once the capsid is full (headful packaging). Once the capsid is packaged with the DNA, the terminase complex is substituted by neck proteins. This is Terminase small subunit from Staphylococcus phage 80alpha.